Reading from the N-terminus, the 84-residue chain is uncharacterized protein (84 aa).

Residues Met1–Asn14 show a composition bias toward low complexity. Residues Met1–Glu84 form a disordered region. Residues Ser28–Phe40 are compositionally biased toward gly residues. Basic and acidic residues-rich tracts occupy residues Asp53–Thr65 and Lys73–Glu84.

This is an uncharacterized protein from Schizosaccharomyces pombe (strain 972 / ATCC 24843) (Fission yeast).